The sequence spans 271 residues: Aquaporin-2 (271 aa).

The Cytoplasmic segment spans residues 1–11; that stretch reads MWELRSIAFSR. Residues 12–32 form a helical membrane-spanning segment; sequence AVLAEFLATLLFVFFGLGSAL. Topologically, residues 33 to 40 are extracellular; that stretch reads NWPQALPS. Residues 41–59 traverse the membrane as a helical segment; sequence VLQIAMAFGLAIGTLVQAL. The Cytoplasmic portion of the chain corresponds to 60–64; sequence GHVSG. The segment at residues 65–74 is an intramembrane region (discontinuously helical); that stretch reads AHINPAVTVA. An NPA 1 motif is present at residues 68–70; the sequence is NPA. Over 75 to 85 the chain is Cytoplasmic; that stretch reads CLVGCHVSFLR. A helical transmembrane segment spans residues 86–107; that stretch reads AVFYVAAQLLGAVAGAALLHEI. At 108 to 127 the chain is on the extracellular side; that stretch reads TPPAIRGDLAVNALNNNSTA. Asn123 carries an N-linked (GlcNAc...) asparagine glycan. A helical membrane pass occupies residues 128–148; that stretch reads GQAVTVELFLTLQLVLCIFAS. The Cytoplasmic segment spans residues 149-156; the sequence is TDERRGDN. The helical transmembrane segment at 157–176 threads the bilayer; the sequence is VGTPALSIGFSVALGHLLGI. Over 177–180 the chain is Extracellular; that stretch reads HYTG. The segment at residues 181-193 is an intramembrane region (discontinuously helical); sequence CSMNPARSLAPAI. The NPA 2 signature appears at 184–186; it reads NPA. Topologically, residues 194–201 are extracellular; that stretch reads VTGKFDDH. A helical transmembrane segment spans residues 202–222; the sequence is WVFWIGPLVGAIVASLLYNYV. Residues 223–271 lie on the Cytoplasmic side of the membrane; sequence LFPPAKSLSERLAVLKGLEPDTDWEEREVRRRQSVELHSPQSLPRGSKA. Positions 251 to 271 are disordered; it reads VRRRQSVELHSPQSLPRGSKA. Ser256 is subject to Phosphoserine. Polar residues predominate over residues 261-271; sequence SPQSLPRGSKA.

It belongs to the MIP/aquaporin (TC 1.A.8) family. As to quaternary structure, homotetramer. In terms of processing, ser-256 phosphorylation is necessary and sufficient for expression at the apical membrane. Endocytosis is not phosphorylation-dependent. Post-translationally, N-glycosylated.

Its subcellular location is the apical cell membrane. The protein resides in the basolateral cell membrane. The protein localises to the cell membrane. It localises to the cytoplasmic vesicle membrane. It is found in the golgi apparatus. Its subcellular location is the trans-Golgi network membrane. It carries out the reaction H2O(in) = H2O(out). It catalyses the reaction glycerol(in) = glycerol(out). Its function is as follows. Forms a water-specific channel that provides the plasma membranes of renal collecting duct with high permeability to water, thereby permitting water to move in the direction of an osmotic gradient. Could also be permeable to glycerol. This Bos taurus (Bovine) protein is Aquaporin-2.